The chain runs to 404 residues: Probable protein phosphatase 2C 30 (404 aa).

The segment covering 42-52 has biased composition (basic and acidic residues); that stretch reads AERGAEEETSG. A disordered region spans residues 42-72; the sequence is AERGAEEETSGKRRRLDGGGGEASTDEEDRE. A PPM-type phosphatase domain is found at 77 to 399; the sequence is RYGFTSVCGR…DNVSVVVVNL (323 aa). Mn(2+) is bound by residues D111, G112, and D298. Positions 321–369 are disordered; it reads GRRERNRSSPTSNLSPRQSSSSGDEAPNDGAPSAAAGSESDEESAAEED. The span at 330 to 343 shows a compositional bias: polar residues; that stretch reads PTSNLSPRQSSSSG. Residue D390 participates in Mn(2+) binding.

It belongs to the PP2C family. As to quaternary structure, interacts with PYL5 and SAPK2. Binding to PYL5 is dependent on the presence of abscisic acid (ABA). Interacts with PYL3, PYL5 and PYL9. Binding to PYL5 and PYL9 is dependent on the presence of ABA. Mg(2+) serves as cofactor. It depends on Mn(2+) as a cofactor.

It is found in the nucleus. The catalysed reaction is O-phospho-L-seryl-[protein] + H2O = L-seryl-[protein] + phosphate. It carries out the reaction O-phospho-L-threonyl-[protein] + H2O = L-threonyl-[protein] + phosphate. Its function is as follows. Together with ABI5, PYL5 and SAPK2, is part of an abscisic acid (ABA) signaling unit that modulates seed germination and early seedling growth. The protein is Probable protein phosphatase 2C 30 of Oryza sativa subsp. japonica (Rice).